Consider the following 364-residue polypeptide: tRNA N6-adenosine threonylcarbamoyltransferase (364 aa).

Fe cation contacts are provided by histidine 115 and histidine 119. Substrate is bound by residues 137-141 (LVSGG), aspartate 170, glycine 183, and asparagine 288. Aspartate 316 serves as a coordination point for Fe cation. The segment at 341–364 (PRSRWPLDEKSAPLIGTGRRGTKA) is disordered.

This sequence belongs to the KAE1 / TsaD family. Fe(2+) serves as cofactor.

The protein localises to the cytoplasm. It catalyses the reaction L-threonylcarbamoyladenylate + adenosine(37) in tRNA = N(6)-L-threonylcarbamoyladenosine(37) in tRNA + AMP + H(+). In terms of biological role, required for the formation of a threonylcarbamoyl group on adenosine at position 37 (t(6)A37) in tRNAs that read codons beginning with adenine. Is involved in the transfer of the threonylcarbamoyl moiety of threonylcarbamoyl-AMP (TC-AMP) to the N6 group of A37, together with TsaE and TsaB. TsaD likely plays a direct catalytic role in this reaction. In Bartonella henselae (strain ATCC 49882 / DSM 28221 / CCUG 30454 / Houston 1) (Rochalimaea henselae), this protein is tRNA N6-adenosine threonylcarbamoyltransferase.